Here is a 311-residue protein sequence, read N- to C-terminus: Dihydroorotate dehydrogenase B (NAD(+)), catalytic subunit (311 aa).

FMN is bound by residues serine 24 and 48–49; that span reads KA. Substrate contacts are provided by residues lysine 48 and 72-76; that span reads NAIGL. FMN-binding residues include asparagine 104 and asparagine 132. Asparagine 132 provides a ligand contact to substrate. Cysteine 135 (nucleophile) is an active-site residue. FMN contacts are provided by lysine 170 and isoleucine 196. 197–198 provides a ligand contact to substrate; it reads NT. FMN is bound by residues glycine 222, 248–249, and 270–271; these read GG and GT.

This sequence belongs to the dihydroorotate dehydrogenase family. Type 1 subfamily. In terms of assembly, heterotetramer of 2 PyrK and 2 PyrD type B subunits. FMN serves as cofactor.

Its subcellular location is the cytoplasm. It catalyses the reaction (S)-dihydroorotate + NAD(+) = orotate + NADH + H(+). It participates in pyrimidine metabolism; UMP biosynthesis via de novo pathway; orotate from (S)-dihydroorotate (NAD(+) route): step 1/1. In terms of biological role, catalyzes the conversion of dihydroorotate to orotate with NAD(+) as electron acceptor. Cannot use fumarate as an electron acceptor. The sequence is that of Dihydroorotate dehydrogenase B (NAD(+)), catalytic subunit (pyrDB) from Lactococcus lactis subsp. cremoris (strain MG1363).